The following is a 317-amino-acid chain: Melanocyte-stimulating hormone receptor (317 aa).

Residues 1 to 37 (MPALGSQRRLLGSLNCTPPATLPFTLAPNRTGPQCLE) are Extracellular-facing. An N-linked (GlcNAc...) asparagine glycan is attached at Asn-29. Residues 38–63 (VSIPDGLFLSLGLVSLVENVLVVAAI) form a helical membrane-spanning segment. Topologically, residues 64-72 (AKNRNLHSP) are cytoplasmic. The chain crosses the membrane as a helical span at residues 73-93 (MYYFICCLAVSDLLVSVSNVL). The Extracellular portion of the chain corresponds to 94-118 (ETAVMLLLEAGVLATQAAVVQQLDN). The helical transmembrane segment at 119-140 (VIDVLICGSMVSSLCFLGAIAV) threads the bilayer. Topologically, residues 141–163 (DRYISIFYALRYHSVVTLPRAWR) are cytoplasmic. A helical transmembrane segment spans residues 164–183 (IIAAIWVASILTSLLFITYY). The Extracellular segment spans residues 184 to 191 (NHKVILLC). The helical transmembrane segment at 192–211 (LVGLFIAMLALMAVLYVHML) threads the bilayer. The Cytoplasmic portion of the chain corresponds to 212-240 (ARACQHARGIARLQKRQRPIHQGFGLKGA). The chain crosses the membrane as a helical span at residues 241 to 266 (ATLTILLGVFFLCWGPFFLHLSLIVL). The Extracellular portion of the chain corresponds to 267-279 (CPQHPTCGCIFKN). The chain crosses the membrane as a helical span at residues 280–300 (FNLFLALIICNAIVDPLIYAF). Over 301-317 (RSQELRKTLQEVLQCSW) the chain is Cytoplasmic. Cys-315 carries S-palmitoyl cysteine lipidation.

Belongs to the G-protein coupled receptor 1 family. As to quaternary structure, interacts with MGRN1, but does not undergo MGRN1-mediated ubiquitination; this interaction competes with GNAS-binding and thus inhibits agonist-induced cAMP production. Interacts with OPN3; the interaction results in a decrease in MC1R-mediated cAMP signaling and ultimately a decrease in melanin production in melanocytes. In terms of tissue distribution, highly expressed in the testis.

It is found in the cell membrane. Its function is as follows. Receptor for MSH (alpha, beta) and ACTH. Does not seem to be active with gamma-MSH. The activity of this receptor is mediated by G proteins which activate adenylate cyclase. Mediates melanogenesis, the production of eumelanin (black/brown) and phaeomelanin (red/yellow), via regulation of cAMP signaling in melanocytes. The polypeptide is Melanocyte-stimulating hormone receptor (MC1R) (Bos taurus (Bovine)).